The sequence spans 326 residues: Putative GTPase CC_2483 (326 aa).

GTP-binding positions include Gly-61–Thr-69, Asp-203, and Ser-238–Leu-240.

Belongs to the SIMIBI class G3E GTPase family. ArgK/MeaB subfamily.

Functionally, may have GTPase activity. May also bind and hydrolyze ATP. May function as chaperone. The protein is Putative GTPase CC_2483 of Caulobacter vibrioides (strain ATCC 19089 / CIP 103742 / CB 15) (Caulobacter crescentus).